A 204-amino-acid chain; its full sequence is Elongation factor Ts (204 aa).

Residues 80–83 (TDFV) form an involved in Mg(2+) ion dislocation from EF-Tu region.

Belongs to the EF-Ts family.

It is found in the cytoplasm. In terms of biological role, associates with the EF-Tu.GDP complex and induces the exchange of GDP to GTP. It remains bound to the aminoacyl-tRNA.EF-Tu.GTP complex up to the GTP hydrolysis stage on the ribosome. This chain is Elongation factor Ts, found in Caldicellulosiruptor bescii (strain ATCC BAA-1888 / DSM 6725 / KCTC 15123 / Z-1320) (Anaerocellum thermophilum).